Reading from the N-terminus, the 1215-residue chain is RNA-dependent RNA polymerase 1 (1215 aa).

It belongs to the RdRP family. As to quaternary structure, cid12, hrr1 and rdp1 interact forming the RNA-directed RNA polymerase complex (RDRC). The RDRC complex interacts with the RITS complex via interaction between ago1 and hrr1. Clr4 has a role in mediating this interaction.

The protein localises to the cytoplasm. The protein resides in the nucleus. Its subcellular location is the chromosome. It localises to the telomere. It is found in the centromere. It carries out the reaction RNA(n) + a ribonucleoside 5'-triphosphate = RNA(n+1) + diphosphate. In terms of biological role, has a role in the RNA interference (RNAi) pathway which is important for heterochromatin formation, accurate chromosome segregation, centromere cohesion and telomere function during mitosis and meiosis. Required for both post-transcriptional and transcriptional gene silencing. Required for silencing at the centromeres and for initiation of transcriptionally silent heterochromatin at the mating type locus. Promotes histone H3 'Lys-10' methylation necessary for centromere function. Required for recruitment of swi6 and cohesin to an ectopic dg repeat. A member of the RNA-directed RNA polymerase complex (RDRC) which is involved in the generation of small interfering RNAs (siRNAs) and mediates their association with the RNA-induced transcriptional silencing (RITS) complex. RITS acts as a priming complex for dsRNA synthesis at the site of non-coding centromeric RNA. Its RNA-dependent RNA polymerase activity is critical in siRNA production necessary for heterochromatin formation. The polypeptide is RNA-dependent RNA polymerase 1 (rdp1) (Schizosaccharomyces pombe (strain 972 / ATCC 24843) (Fission yeast)).